Reading from the N-terminus, the 143-residue chain is Large ribosomal subunit protein uL13 (143 aa).

Belongs to the universal ribosomal protein uL13 family. Part of the 50S ribosomal subunit.

In terms of biological role, this protein is one of the early assembly proteins of the 50S ribosomal subunit, although it is not seen to bind rRNA by itself. It is important during the early stages of 50S assembly. The sequence is that of Large ribosomal subunit protein uL13 from Desulfitobacterium hafniense (strain Y51).